We begin with the raw amino-acid sequence, 89 residues long: Small ribosomal subunit protein uS17 (89 aa).

Belongs to the universal ribosomal protein uS17 family. As to quaternary structure, part of the 30S ribosomal subunit.

In terms of biological role, one of the primary rRNA binding proteins, it binds specifically to the 5'-end of 16S ribosomal RNA. The chain is Small ribosomal subunit protein uS17 from Novosphingobium aromaticivorans (strain ATCC 700278 / DSM 12444 / CCUG 56034 / CIP 105152 / NBRC 16084 / F199).